The following is a 131-amino-acid chain: Interleukin-13 (131 aa).

The N-terminal stretch at 1-18 (MALWLTVVIALTCLGGLA) is a signal peptide. N-linked (GlcNAc...) asparagine glycans are attached at residues asparagine 38, asparagine 48, asparagine 56, and asparagine 71. 2 disulfides stabilise this stretch: cysteine 47-cysteine 75 and cysteine 63-cysteine 89.

The protein belongs to the IL-4/IL-13 family. Interacts with IL13RA2.

The protein localises to the secreted. Cytokine that plays important roles in allergic inflammation and immune response to parasite infection. Synergizes with IL2 in regulating interferon-gamma synthesis. Stimulates B-cell proliferation, and activation of eosinophils, basophils, and mast cells. Plays an important role in controlling IL33 activity by modulating the production of transmembrane and soluble forms of interleukin-1 receptor-like 1/IL1RL1. Displays the capacity to antagonize Th1-driven proinflammatory immune response and downregulates synthesis of many proinflammatory cytokines including IL1, IL6, IL10, IL12 and TNF-alpha through a mechanism that partially involves suppression of NF-kappa-B. Also functions on nonhematopoietic cells, including endothelial cells where it induces vascular cell adhesion protein 1/VCAM1, which is important in the recruitment of eosinophils. Exerts its biological effects through its receptors which comprises the IL4R chain and the IL13RA1 chain, to activate JAK1 and TYK2, leading to the activation of STAT6. Aside from IL13RA1, another receptor IL13RA2 acts as a high affinity decoy for IL13 and mediates internalization and depletion of extracellular IL13. This chain is Interleukin-13 (IL13), found in Canis lupus familiaris (Dog).